The primary structure comprises 66 residues: Large ribosomal subunit protein bL32 (66 aa).

It belongs to the bacterial ribosomal protein bL32 family.

The chain is Large ribosomal subunit protein bL32 from Rickettsia conorii (strain ATCC VR-613 / Malish 7).